The following is a 424-amino-acid chain: ATP-sensitive inward rectifier potassium channel 8 (424 aa).

Topologically, residues Met1–Trp69 are cytoplasmic. Ser6 is subject to Phosphoserine. Residues Arg70–Val94 traverse the membrane as a helical segment. The Extracellular segment spans residues Ala95–Ser126. Residues Phe127–Gln138 constitute an intramembrane region (helical; Pore-forming). The segment at residues Val139–Gly145 is an intramembrane region (pore-forming). A Selectivity filter motif is present at residues Thr140 to Gly145. The Extracellular portion of the chain corresponds to Arg146–Leu154. The helical transmembrane segment at Ala155–Cys176 threads the bilayer. At Ile177–Ser424 the chain is on the cytoplasmic side. Positions Ser375 to Ser424 are disordered. The segment covering Arg387–Ser404 has biased composition (low complexity).

This sequence belongs to the inward rectifier-type potassium channel (TC 1.A.2.1) family. KCNJ8 subfamily. In terms of assembly, interacts with ABCC9. In terms of tissue distribution, predominantly detected in fetal and adult heart.

The protein localises to the membrane. It catalyses the reaction K(+)(in) = K(+)(out). Functionally, inward rectifier potassium channels are characterized by a greater tendency to allow potassium to flow into the cell rather than out of it. Their voltage dependence is regulated by the concentration of extracellular potassium; as external potassium is raised, the voltage range of the channel opening shifts to more positive voltages. The inward rectification is mainly due to the blockage of outward current by internal magnesium. This channel is activated by internal ATP and can be blocked by external barium. Can form a sulfonylurea-sensitive but ATP-insensitive potassium channel with ABCC9. The polypeptide is ATP-sensitive inward rectifier potassium channel 8 (KCNJ8) (Homo sapiens (Human)).